We begin with the raw amino-acid sequence, 313 residues long: WD repeat-containing protein 82 (313 aa).

WD repeat units lie at residues 19 to 58, 105 to 144, 146 to 184, 192 to 231, 236 to 276, and 280 to 313; these read ENSD…PKRT, GHSK…CQGL, HLQG…KGPF, DRTC…VMHT, NNSK…KVAV, and KHTG…TIDD.

Belongs to the WD repeat SWD2 family. As to quaternary structure, component of the SET1/COMPASS complex. Component of the PNUTS-PP1 phosphatase complex.

The protein resides in the nucleus. The protein localises to the chromosome. It is found in the cytoplasm. Regulatory component of the SET1/COMPASS complex implicated in the tethering of this complex to transcriptional start sites of active genes. Facilitates histone H3 'Lys-4' methylation (H3K4me) via recruitment of the SETD1A or SETD1B to the 'Ser-5' phosphorylated C-terminal domain (CTD) of RNA polymerase II large subunit (POLR2A). Component of the PNUTS-PP1 protein phosphatase complex, a protein phosphatase 1 (PP1) complex that promotes RNA polymerase II transcription pause-release, allowing transcription elongation. The polypeptide is WD repeat-containing protein 82 (wdr82) (Xenopus tropicalis (Western clawed frog)).